The sequence spans 180 residues: Pro-glucagon (180 aa).

Positions 1 to 20 are cleaved as a signal peptide; it reads MKSIYFVAGLFVMLVQGSWQ. Residues 23 to 56 form a disordered region; that stretch reads LQDTEEKPRSFSTSQTDLLDDPDQMNEDKRHSQG. Phosphoserine is present on S54. Residues 84–89 constitute a propeptide that is removed on maturation; it reads NRNEIA. S105 and S108 each carry phosphoserine. R127 carries the post-translational modification Arginine amide. Residues 131-145 constitute a propeptide that is removed on maturation; sequence DFPEEVTIVEELRRR. S150 and S152 each carry phosphoserine.

This sequence belongs to the glucagon family. Post-translationally, proglucagon is post-translationally processed in a tissue-specific manner in pancreatic A cells and intestinal L cells. In pancreatic A cells, the major bioactive hormone is glucagon cleaved by PCSK2/PC2. In the intestinal L cells PCSK1/PC1 liberates GLP-1, GLP-2, glicentin and oxyntomodulin. GLP-1 is further N-terminally truncated by post-translational processing in the intestinal L cells resulting in GLP-1(7-37) GLP-1-(7-36)amide. The C-terminal amidation is neither important for the metabolism of GLP-1 nor for its effects on the endocrine pancreas. In terms of tissue distribution, glucagon is secreted in the A cells of the islets of Langerhans. GLP-1, GLP-2, oxyntomodulin and glicentin are secreted from enteroendocrine cells throughout the gastrointestinal tract. GLP-1 and GLP-2 are also secreted in selected neurons in the brain.

Its subcellular location is the secreted. In terms of biological role, plays a key role in glucose metabolism and homeostasis. Regulates blood glucose by increasing gluconeogenesis and decreasing glycolysis. A counterregulatory hormone of insulin, raises plasma glucose levels in response to insulin-induced hypoglycemia. Plays an important role in initiating and maintaining hyperglycemic conditions in diabetes. Functionally, potent stimulator of glucose-dependent insulin release. Also stimulates insulin release in response to IL6. Plays important roles on gastric motility and the suppression of plasma glucagon levels. May be involved in the suppression of satiety and stimulation of glucose disposal in peripheral tissues, independent of the actions of insulin. Has growth-promoting activities on intestinal epithelium. May also regulate the hypothalamic pituitary axis (HPA) via effects on LH, TSH, CRH, oxytocin, and vasopressin secretion. Increases islet mass through stimulation of islet neogenesis and pancreatic beta cell proliferation. Inhibits beta cell apoptosis. Stimulates intestinal growth and up-regulates villus height in the small intestine, concomitant with increased crypt cell proliferation and decreased enterocyte apoptosis. The gastrointestinal tract, from the stomach to the colon is the principal target for GLP-2 action. Plays a key role in nutrient homeostasis, enhancing nutrient assimilation through enhanced gastrointestinal function, as well as increasing nutrient disposal. Stimulates intestinal glucose transport and decreases mucosal permeability. Its function is as follows. Significantly reduces food intake. Inhibits gastric emptying in humans. Suppression of gastric emptying may lead to increased gastric distension, which may contribute to satiety by causing a sensation of fullness. In terms of biological role, may modulate gastric acid secretion and the gastro-pyloro-duodenal activity. May play an important role in intestinal mucosal growth in the early period of life. The chain is Pro-glucagon (GCG) from Octodon degus (Degu).